The sequence spans 247 residues: Proteasome subunit alpha type-7 (247 aa).

It belongs to the peptidase T1A family. The 26S proteasome consists of a 20S proteasome core and two 19S regulatory subunits. The 20S proteasome core is composed of 28 subunits that are arranged in four stacked rings, resulting in a barrel-shaped structure. The two end rings are each formed by seven alpha subunits, and the two central rings are each formed by seven beta subunits. The catalytic chamber with the active sites is on the inside of the barrel.

Its subcellular location is the cytoplasm. It localises to the nucleus. Its function is as follows. The proteasome is a multicatalytic proteinase complex which is characterized by its ability to cleave peptides with Arg, Phe, Tyr, Leu, and Glu adjacent to the leaving group at neutral or slightly basic pH. The proteasome has an ATP-dependent proteolytic activity. This is Proteasome subunit alpha type-7 (PSA4) from Trypanosoma brucei brucei.